The primary structure comprises 849 residues: Coiled-coil domain-containing protein 87 (849 aa).

The stretch at 387 to 415 (RHPAAGHRLEELEKMLRNLQEEEASGQWD) forms a coiled coil.

This sequence belongs to the CCDC87 family.

Its function is as follows. Plays a role in spermatogenesis, where it is important for normal sperm head morphology. Also required for the acrosome reaction and thus normal male fertility. The chain is Coiled-coil domain-containing protein 87 (CCDC87) from Homo sapiens (Human).